The following is a 380-amino-acid chain: Cysteine protease ATG4A (380 aa).

Residue Cys-60 is the Nucleophile of the active site. Residues Asp-262 and His-264 contribute to the active site. Positions 375–378 (FEIL) match the LIR motif.

This sequence belongs to the peptidase C54 family.

It is found in the cytoplasm. The enzyme catalyses [protein]-C-terminal L-amino acid-glycyl-phosphatidylethanolamide + H2O = [protein]-C-terminal L-amino acid-glycine + a 1,2-diacyl-sn-glycero-3-phosphoethanolamine. In terms of biological role, cysteine protease that plays a key role in autophagy by mediating both proteolytic activation and delipidation of ATG8 family proteins. The protease activity is required for proteolytic activation of ATG8 family proteins: cleaves the C-terminal amino acid of ATG8 proteins to reveal a C-terminal glycine. Exposure of the glycine at the C-terminus is essential for ATG8 proteins conjugation to phosphatidylethanolamine (PE) and insertion to membranes, which is necessary for autophagy. Protease activity is also required to counteract formation of high-molecular weight conjugates of ATG8 proteins (ATG8ylation): acts as a deubiquitinating-like enzyme that removes ATG8 conjugated to other proteins, such as ATG3. In addition to the protease activity, also mediates delipidation of ATG8 family proteins. Catalyzes delipidation of PE-conjugated forms of ATG8 proteins during macroautophagy. In Gallus gallus (Chicken), this protein is Cysteine protease ATG4A.